A 225-amino-acid polypeptide reads, in one-letter code: C-reactive protein (225 aa).

The N-terminal stretch at 1-19 is a signal peptide; sequence MAKLLLYFLLLTSLSDVFG. A Pentraxin (PTX) domain is found at 24 to 225; the sequence is SKKTFVFPKE…EVFIKPQLWP (202 aa). Residues Cys-55 and Cys-116 are joined by a disulfide bond. Ca(2+) contacts are provided by Asn-80, Gln-158, Asp-159, and Gln-169.

This sequence belongs to the pentraxin family. Homopentamer. Pentraxin (or pentaxin) have a discoid arrangement of 5 non-covalently bound subunits. Interacts with FCN1; may regulate monocyte activation by FCN1. Requires Ca(2+) as cofactor. In terms of tissue distribution, found in plasma.

The protein resides in the secreted. Displays several functions associated with host defense: it promotes agglutination, bacterial capsular swelling, phagocytosis and complement fixation through its calcium-dependent binding to phosphorylcholine. Can interact with DNA and histones and may scavenge nuclear material released from damaged circulating cells. In Cavia porcellus (Guinea pig), this protein is C-reactive protein (CRP).